The chain runs to 179 residues: Large ribosomal subunit protein uL5 (179 aa).

The protein belongs to the universal ribosomal protein uL5 family. Part of the 50S ribosomal subunit; part of the 5S rRNA/L5/L18/L25 subcomplex. Contacts the 5S rRNA and the P site tRNA. Forms a bridge to the 30S subunit in the 70S ribosome.

This is one of the proteins that bind and probably mediate the attachment of the 5S RNA into the large ribosomal subunit, where it forms part of the central protuberance. In the 70S ribosome it contacts protein S13 of the 30S subunit (bridge B1b), connecting the 2 subunits; this bridge is implicated in subunit movement. Contacts the P site tRNA; the 5S rRNA and some of its associated proteins might help stabilize positioning of ribosome-bound tRNAs. The protein is Large ribosomal subunit protein uL5 of Bacillus cereus (strain G9842).